The primary structure comprises 34 residues: GIPCFPSSLKRLLIIVVVIVLVVVVIVGALLMGL.

C4 is lipidated: S-palmitoyl cysteine.

The protein localises to the secreted. It localises to the extracellular space. The protein resides in the surface film. Its function is as follows. Pulmonary surfactant associated proteins promote alveolar stability by lowering the surface tension at the air-liquid interface in the peripheral air spaces. This Canis lupus familiaris (Dog) protein is Surfactant protein C (SFTPC).